A 332-amino-acid chain; its full sequence is Cysteine and histidine-rich domain-containing protein 1 (332 aa).

Position 2 is an N-acetylalanine (A2). Residues 2 to 77 (ALLCYNRGCG…KPPEPVKPEV (76 aa)) form an interaction with PPP5C region. Zn(2+) is bound by residues C5, C10, C24, H27, C42, and C43. CHORD domains follow at residues 5-64 (CYNR…KGRH) and 157-216 (CKNG…KGKH). T47 is subject to Phosphothreonine. Residue S51 is modified to Phosphoserine. Zn(2+)-binding residues include C59, H64, C157, C162, C176, H179, C194, C195, C211, and H216. Positions 65–316 (NSEKPPEPVK…AEPMQWASLE (252 aa)) are interaction with HSP90AA1 and HSP90AB1. A CS domain is found at 227–316 (VVPCRHDWHQ…AEPMQWASLE (90 aa)).

Interacts with HSP90AA1, ROCK1 and ROCK2. Interacts with HSP90AB1 and PPP5C. As to expression, underexpressed in many breast and lung cancers.

Regulates centrosome duplication, probably by inhibiting the kinase activity of ROCK2. Proposed to act as co-chaperone for HSP90. May play a role in the regulation of NOD1 via a HSP90 chaperone complex. In vitro, has intrinsic chaperone activity. This function may be achieved by inhibiting association of ROCK2 with NPM1. Plays a role in ensuring the localization of the tyrosine kinase receptor EGFR to the plasma membrane, and thus ensures the subsequent regulation of EGFR activity and EGF-induced actin cytoskeleton remodeling. Involved in stress response. Prevents tumorigenesis. The protein is Cysteine and histidine-rich domain-containing protein 1 (CHORDC1) of Homo sapiens (Human).